The following is a 228-amino-acid chain: Ribulose-phosphate 3-epimerase-like protein 1 (228 aa).

Ser-10 contributes to the substrate binding site. A divalent metal cation contacts are provided by His-35, Asp-37, and His-70. The Proton acceptor role is filled by Asp-37. Substrate-binding positions include His-70, 146 to 149 (GFGE), 175 to 177 (DGG), and 197 to 198 (GS). Asp-175 contacts a divalent metal cation. Residue Asp-175 is the Proton donor of the active site.

This sequence belongs to the ribulose-phosphate 3-epimerase family. In terms of assembly, homodimer. Fe(2+) serves as cofactor. The cofactor is Mn(2+). It depends on Zn(2+) as a cofactor. Co(2+) is required as a cofactor.

It catalyses the reaction D-ribulose 5-phosphate = D-xylulose 5-phosphate. It participates in carbohydrate degradation. Catalyzes the reversible epimerization of D-ribulose 5-phosphate to D-xylulose 5-phosphate. This is Ribulose-phosphate 3-epimerase-like protein 1 (RPEL1) from Homo sapiens (Human).